The primary structure comprises 1179 residues: Protein FAM83H (1179 aa).

The tract at residues 1–286 is DUF1669; that stretch reads MARRSQSSSQ…LFAQSEPLVP (286 aa). The segment at 1–286 is mediates interaction with CSNK1A1 and is required for FAM83H activity in keratin cytoskeleton organization; that stretch reads MARRSQSSSQ…LFAQSEPLVP (286 aa). The residue at position 465 (Thr465) is a Phosphothreonine. 2 disordered regions span residues 484–577 and 636–669; these read ADPD…GRAG and FPTK…DSFR. Phosphoserine occurs at positions 513, 514, 516, 523, 647, and 667. The residue at position 756 (Thr756) is a Phosphothreonine. Phosphoserine is present on residues Ser759, Ser785, and Ser813. The tract at residues 830–1026 is disordered; sequence RLPSRFLSAQ…RGPRARLSSA (197 aa). Positions 836–847 are enriched in polar residues; it reads LSAQSHSTSPQG. Residues Ser870 and Ser881 each carry the phosphoserine modification. Thr883 is subject to Phosphothreonine. The segment covering 884 to 906 has biased composition (polar residues); the sequence is PGFSTRRGSPTTGFIEQKGSPTS. Position 892 is a phosphoserine (Ser892). Thr894 carries the phosphothreonine modification. Phosphoserine occurs at positions 903, 914, 925, 936, 945, 1003, 1009, 1024, and 1025. Phosphothreonine is present on Thr1040. 2 disordered regions span residues 1047–1084 and 1143–1165; these read ISAH…APDM and EEAS…SKVG. Phosphoserine is present on residues Ser1048, Ser1068, and Ser1147.

Belongs to the FAM83 family. In terms of assembly, directly interacts (via DUF1669) with casein kinase isoforms CSNK1A1, CSNK1A1L, CSNK1D and CSNK1E. Interaction with CSNK1A1 recruits CSNK1A1 to keratin filaments. Interacts with KRT18 and probably other keratins. As to expression, expressed in the tooth follicle.

It localises to the cytoplasm. The protein resides in the cytoskeleton. May play a major role in the structural organization and calcification of developing enamel. May play a role in keratin cytoskeleton disassembly by recruiting CSNK1A1 to keratin filaments. Thereby, it may regulate epithelial cell migration. This Homo sapiens (Human) protein is Protein FAM83H.